Reading from the N-terminus, the 930-residue chain is uncharacterized protein (930 aa).

The signal sequence occupies residues 1–20; the sequence is MPSFVLWTFHLCSQWFQGLT. Residues Asn-137, Asn-146, Asn-164, Asn-210, Asn-257, Asn-628, Asn-717, and Asn-799 are each glycosylated (N-linked (GlcNAc...) asparagine).

The protein localises to the secreted. This is an uncharacterized protein from Arthroderma benhamiae (strain ATCC MYA-4681 / CBS 112371) (Trichophyton mentagrophytes).